The primary structure comprises 112 residues: Integration host factor subunit alpha (112 aa).

This sequence belongs to the bacterial histone-like protein family. As to quaternary structure, heterodimer of an alpha and a beta chain.

Functionally, this protein is one of the two subunits of integration host factor, a specific DNA-binding protein that functions in genetic recombination as well as in transcriptional and translational control. The sequence is that of Integration host factor subunit alpha from Sinorhizobium fredii (strain NBRC 101917 / NGR234).